Consider the following 501-residue polypeptide: Ribose import ATP-binding protein RbsA (501 aa).

ABC transporter domains lie at 5-241 (LQLK…VGRK) and 252-495 (APGD…VGKL). 37-44 (GENGAGKS) serves as a coordination point for ATP.

It belongs to the ABC transporter superfamily. Ribose importer (TC 3.A.1.2.1) family. As to quaternary structure, the complex is composed of an ATP-binding protein (RbsA), two transmembrane proteins (RbsC) and a solute-binding protein (RbsB).

The protein resides in the cell inner membrane. It catalyses the reaction D-ribose(out) + ATP + H2O = D-ribose(in) + ADP + phosphate + H(+). Its function is as follows. Part of the ABC transporter complex RbsABC involved in ribose import. Responsible for energy coupling to the transport system. This chain is Ribose import ATP-binding protein RbsA, found in Escherichia coli O6:H1 (strain CFT073 / ATCC 700928 / UPEC).